Here is a 1069-residue protein sequence, read N- to C-terminus: Cellulose synthase A catalytic subunit 5 [UDP-forming] (1069 aa).

At Met1 the chain carries N-acetylmethionine. The Cytoplasmic portion of the chain corresponds to 1–265; the sequence is MNTGGRLIAG…KSSKINPYRM (265 aa). The Zn(2+) site is built by Cys39, Cys42, Cys58, Cys61, Cys66, Cys69, Cys81, and Cys84. Residues 39–85 form an RING-type; degenerate zinc finger; that stretch reads CQICGDEIELSVDGESFVACNECAFPVCRPCYEYERREGNQSCPQCK. A phosphoserine mark is found at Ser229 and Ser230. The helical transmembrane segment at 266–286 threads the bilayer; the sequence is LIVLRLVILGLFFHYRILHPV. Residues 287-288 lie on the Extracellular side of the membrane; it reads ND. Residues 289-309 traverse the membrane as a helical segment; that stretch reads AYALWLISVICEIWFAVSWVL. Topologically, residues 310–853 are cytoplasmic; the sequence is DQFPKWYPIE…INSVVYPWTS (544 aa). 4 residues coordinate UDP-alpha-D-glucose: Ser348, Lys354, Glu355, and Asp384. Asp384 is an active-site residue. Residues 438-464 are a coiled coil; the sequence is VRERRAMKRDYEEFKVKINALVATAQK. Lys525 contributes to the UDP-alpha-D-glucose binding site. 2 residues coordinate Mn(2+): Lys526 and Asp550. The active site involves Asp770. A helical membrane pass occupies residues 854-874; that stretch reads IPLLVYCSLPAICLLTGKFIV. Residues 875-879 lie on the Extracellular side of the membrane; it reads PEISN. Residues 880 to 900 traverse the membrane as a helical segment; sequence YASILFMALFGSIAVTGILEM. At 901–915 the chain is on the cytoplasmic side; sequence QWGKVGIDDWWRNEQ. The helical transmembrane segment at 916–936 threads the bilayer; that stretch reads FWVIGGVSAHLFALFQGLLKV. Topologically, residues 937-965 are extracellular; it reads LAGVETNFTVTSKAADDGEFSELYIFKWT. Asn943 is a glycosylation site (N-linked (GlcNAc...) asparagine). A helical membrane pass occupies residues 966-986; the sequence is SLLIPPTTLLIINVIGVIVGI. The Cytoplasmic portion of the chain corresponds to 987 to 997; it reads SDAISNGYDSW. The helical transmembrane segment at 998–1018 threads the bilayer; the sequence is GPLFGRLFFAFWVILHLYPFL. Topologically, residues 1019 to 1027 are extracellular; that stretch reads KGLLGKQDR. The helical transmembrane segment at 1028 to 1048 threads the bilayer; that stretch reads MPTIILVWSILLASILTLLWV. The Cytoplasmic segment spans residues 1049-1069; it reads RVNPFVAKGGPILEICGLDCL.

It belongs to the glycosyltransferase 2 family. Plant cellulose synthase subfamily. Zn(2+) is required as a cofactor. Requires Mn(2+) as cofactor. In terms of tissue distribution, expressed in young plants, stems and flowers.

It is found in the cell membrane. The enzyme catalyses [(1-&gt;4)-beta-D-glucosyl](n) + UDP-alpha-D-glucose = [(1-&gt;4)-beta-D-glucosyl](n+1) + UDP + H(+). It participates in glycan metabolism; plant cellulose biosynthesis. In terms of biological role, catalytic subunit of cellulose synthase terminal complexes ('rosettes'), required for beta-1,4-glucan microfibril crystallization, a major mechanism of the cell wall formation. The protein is Cellulose synthase A catalytic subunit 5 [UDP-forming] of Arabidopsis thaliana (Mouse-ear cress).